Reading from the N-terminus, the 202-residue chain is ATP-dependent Clp protease proteolytic subunit 1 (202 aa).

Catalysis depends on Ser99, which acts as the Nucleophile. His123 is an active-site residue.

Belongs to the peptidase S14 family. Fourteen ClpP subunits assemble into 2 heptameric rings which stack back to back to give a disk-like structure with a central cavity, resembling the structure of eukaryotic proteasomes.

It localises to the cytoplasm. It carries out the reaction Hydrolysis of proteins to small peptides in the presence of ATP and magnesium. alpha-casein is the usual test substrate. In the absence of ATP, only oligopeptides shorter than five residues are hydrolyzed (such as succinyl-Leu-Tyr-|-NHMec, and Leu-Tyr-Leu-|-Tyr-Trp, in which cleavage of the -Tyr-|-Leu- and -Tyr-|-Trp bonds also occurs).. Its function is as follows. Cleaves peptides in various proteins in a process that requires ATP hydrolysis. Has a chymotrypsin-like activity. Plays a major role in the degradation of misfolded proteins. This chain is ATP-dependent Clp protease proteolytic subunit 1, found in Symbiobacterium thermophilum (strain DSM 24528 / JCM 14929 / IAM 14863 / T).